Consider the following 90-residue polypeptide: Acylphosphatase (90 aa).

An Acylphosphatase-like domain is found at 3 to 90; sequence AVHMNASGQV…FEGQDFIVKY (88 aa). Active-site residues include Arg18 and Asn36.

Belongs to the acylphosphatase family.

The enzyme catalyses an acyl phosphate + H2O = a carboxylate + phosphate + H(+). The protein is Acylphosphatase (acyP) of Pediococcus pentosaceus (strain ATCC 25745 / CCUG 21536 / LMG 10740 / 183-1w).